Reading from the N-terminus, the 244-residue chain is ATP synthase subunit a (244 aa).

The next 6 membrane-spanning stretches (helical) occupy residues 17–37 (LTNI…AILT), 75–95 (FLAL…LGLP), 112–132 (DPAI…YYGV), 164–184 (LTLG…LGLL), 196–216 (FFLG…WQAF), and 217–237 (SLFI…VYMS).

Belongs to the ATPase A chain family. In terms of assembly, F-type ATPases have 2 components, CF(1) - the catalytic core - and CF(0) - the membrane proton channel. CF(1) has five subunits: alpha(3), beta(3), gamma(1), delta(1), epsilon(1). CF(0) has three main subunits: a(1), b(2) and c(9-12). The alpha and beta chains form an alternating ring which encloses part of the gamma chain. CF(1) is attached to CF(0) by a central stalk formed by the gamma and epsilon chains, while a peripheral stalk is formed by the delta and b chains.

The protein resides in the cell membrane. Functionally, key component of the proton channel; it plays a direct role in the translocation of protons across the membrane. The polypeptide is ATP synthase subunit a (Bacillus velezensis (strain DSM 23117 / BGSC 10A6 / LMG 26770 / FZB42) (Bacillus amyloliquefaciens subsp. plantarum)).